The following is a 393-amino-acid chain: Sister chromatid cohesion protein DCC1 (393 aa).

It belongs to the DCC1 family. In terms of assembly, component of the CTF18-RFC complex which consists of CTF8, CTF18, DSCC1 and the RFC complex. Interacts with CTF8 and CTF18. Interacts with DDX11.

The protein localises to the nucleus. In terms of biological role, loads PCNA onto primed templates regulating velocity, spacing and restart activity of replication forks. May couple DNA replication to sister chromatid cohesion through regulation of the acetylation of the cohesin subunit SMC3. This is Sister chromatid cohesion protein DCC1 (DSCC1) from Homo sapiens (Human).